We begin with the raw amino-acid sequence, 305 residues long: 4-diphosphocytidyl-2-C-methyl-D-erythritol kinase (305 aa).

The active site involves Lys17. Position 111–121 (111–121) interacts with ATP; that stretch reads PVASGIGGGSA. Residue Asp154 is part of the active site.

It belongs to the GHMP kinase family. IspE subfamily.

It catalyses the reaction 4-CDP-2-C-methyl-D-erythritol + ATP = 4-CDP-2-C-methyl-D-erythritol 2-phosphate + ADP + H(+). It functions in the pathway isoprenoid biosynthesis; isopentenyl diphosphate biosynthesis via DXP pathway; isopentenyl diphosphate from 1-deoxy-D-xylulose 5-phosphate: step 3/6. Functionally, catalyzes the phosphorylation of the position 2 hydroxy group of 4-diphosphocytidyl-2C-methyl-D-erythritol. The sequence is that of 4-diphosphocytidyl-2-C-methyl-D-erythritol kinase from Gluconacetobacter diazotrophicus (strain ATCC 49037 / DSM 5601 / CCUG 37298 / CIP 103539 / LMG 7603 / PAl5).